Reading from the N-terminus, the 418-residue chain is Histidinol dehydrogenase (418 aa).

Y119, Q180, and N203 together coordinate NAD(+). Substrate contacts are provided by T226, Q248, and H251. Positions 248 and 251 each coordinate Zn(2+). Active-site proton acceptor residues include E316 and H317. Substrate-binding residues include H317, D350, E404, and H409. D350 contacts Zn(2+). H409 provides a ligand contact to Zn(2+).

The protein belongs to the histidinol dehydrogenase family. The cofactor is Zn(2+).

It catalyses the reaction L-histidinol + 2 NAD(+) + H2O = L-histidine + 2 NADH + 3 H(+). It participates in amino-acid biosynthesis; L-histidine biosynthesis; L-histidine from 5-phospho-alpha-D-ribose 1-diphosphate: step 9/9. Its function is as follows. Catalyzes the sequential NAD-dependent oxidations of L-histidinol to L-histidinaldehyde and then to L-histidine. The polypeptide is Histidinol dehydrogenase (Staphylococcus aureus (strain MRSA252)).